The chain runs to 522 residues: Glutamate--cysteine ligase, chloroplastic (522 aa).

Cystine bridges form between Cys-186-Cys-406 and Cys-349-Cys-364.

It belongs to the carboxylate-amine ligase family. Glutamate--cysteine ligase type 2 subfamily. As to quaternary structure, homodimer or monomer when oxidized or reduced, respectively. Post-translationally, the Cys-186-Cys-406 disulfide bridge is known to modulate the enzyme activity according to the redox status. The oxidized form constitutes the active enzyme. In terms of tissue distribution, abundant in leaves and roots. Expressed to a high level in leaf trichomes of mature plant.

Its subcellular location is the plastid. It is found in the chloroplast. The catalysed reaction is L-cysteine + L-glutamate + ATP = gamma-L-glutamyl-L-cysteine + ADP + phosphate + H(+). Its pathway is sulfur metabolism; glutathione biosynthesis; glutathione from L-cysteine and L-glutamate: step 1/2. Its activity is regulated as follows. Feedback inhibition by glutathione. Inhibited by buthionine sulfoximine and cystamine. Seems to play an important role in controlling the expression of resistance responses like the regulation of salicylic acid (SA) and phytoalexin (camalexin) production. Involved in resistance to fungal and bacterial pathogens. Required for the regulation of cell proliferation in root apical meristems through the GSH-dependent developmental pathway. Also participates in the detoxification process, the antioxidant response and is essential for embryo development and proper seed maturation. This chain is Glutamate--cysteine ligase, chloroplastic (GSH1), found in Arabidopsis thaliana (Mouse-ear cress).